Consider the following 1513-residue polypeptide: Protein tincar (1513 aa).

At Met-1–Ser-77 the chain is on the cytoplasmic side. Residues Leu-78–Gly-98 form a helical membrane-spanning segment. Residues Ala-99–Leu-120 are Extracellular-facing. The chain crosses the membrane as a helical span at residues Gln-121–Phe-141. Residues Lys-142 to Ala-181 are Cytoplasmic-facing. A helical membrane pass occupies residues Leu-182–Leu-202. Residues Leu-203–Ala-668 lie on the Extracellular side of the membrane. Disordered stretches follow at residues Thr-247–Gly-266, Glu-354–Val-373, and Met-383–Arg-532. Residues Ala-427–Thr-466 show a composition bias toward low complexity. The span at Ser-478–Val-507 shows a compositional bias: basic residues. Basic and acidic residues predominate over residues Thr-523 to Arg-532. The helical transmembrane segment at Glu-669–Trp-689 threads the bilayer. Over Asn-690–Ala-696 the chain is Cytoplasmic. The helical transmembrane segment at Cys-697–Ile-717 threads the bilayer. At Ser-718–Gly-736 the chain is on the extracellular side. A helical transmembrane segment spans residues Leu-737 to Ala-757. Residues Ser-758–Thr-787 lie on the Cytoplasmic side of the membrane. Residues Trp-788 to Ala-808 traverse the membrane as a helical segment. The Extracellular segment spans residues Pro-809–Thr-826. The chain crosses the membrane as a helical span at residues Phe-827 to Leu-847. Topologically, residues Thr-848 to His-1513 are cytoplasmic. 2 stretches are compositionally biased toward low complexity: residues Ser-879–Gly-903 and Gln-1060–Gln-1071. Disordered regions lie at residues Ser-879 to Ala-913, Glu-1045 to Gly-1090, Ala-1115 to Gly-1155, Glu-1173 to His-1214, and Ala-1231 to Ala-1335. The segment covering Pro-1122–Val-1149 has biased composition (pro residues). Composition is skewed to low complexity over residues Leu-1179–Gln-1208 and Thr-1255–His-1285. The segment covering Ser-1286 to Ile-1296 has biased composition (basic and acidic residues). A compositionally biased stretch (pro residues) spans Lys-1303–Gln-1314. Polar residues predominate over residues Met-1324–Ala-1335.

In terms of tissue distribution, expression varies in tissues throughout development. At stage 5, expressed in the embryo dorsal region followed by expression in a striped pattern at stage 6. During gastrulation, expressed in ventral region and ventral nerve cord. Also detected in many neurons in the externa sensilla and chordotonal organ. At stage 16, expressed on the surface of the midgut. Additionally, expressed in a subset of cardioblasts (Tin+ subpopulation) during dorsal vessel formation. In third-instar larval tissues, expressed in the eye and antennal disks. In the antennal disks, expressed in the second antennal segments. In the eye disks, strongest expression found in the ocelli, and in the differentiating ommatidial cells. Also expressed in all cells within and in the vicinity of the morphogenetic furrow.

It is found in the membrane. Involved in eye morphogenesis. May be essential for the normal differentiation of ommatidial cells. In Drosophila melanogaster (Fruit fly), this protein is Protein tincar (tinc).